The following is a 98-amino-acid chain: Citrate lyase acyl carrier protein (98 aa).

O-(phosphoribosyl dephospho-coenzyme A)serine is present on Ser-14.

This sequence belongs to the CitD family. Oligomer with a subunit composition of (alpha,beta,gamma)6.

Its subcellular location is the cytoplasm. Functionally, covalent carrier of the coenzyme of citrate lyase. The polypeptide is Citrate lyase acyl carrier protein (Escherichia coli O127:H6 (strain E2348/69 / EPEC)).